Consider the following 462-residue polypeptide: ATP synthase subunit beta 1 (462 aa).

151–158 (GGAGVGKT) contacts ATP.

This sequence belongs to the ATPase alpha/beta chains family. F-type ATPases have 2 components, CF(1) - the catalytic core - and CF(0) - the membrane proton channel. CF(1) has five subunits: alpha(3), beta(3), gamma(1), delta(1), epsilon(1). CF(0) has four main subunits: a(1), b(1), b'(1) and c(9-12).

It is found in the cell inner membrane. The enzyme catalyses ATP + H2O + 4 H(+)(in) = ADP + phosphate + 5 H(+)(out). Its function is as follows. Produces ATP from ADP in the presence of a proton gradient across the membrane. The catalytic sites are hosted primarily by the beta subunits. In Chlorobium luteolum (strain DSM 273 / BCRC 81028 / 2530) (Pelodictyon luteolum), this protein is ATP synthase subunit beta 1.